A 146-amino-acid polypeptide reads, in one-letter code: Hemoglobin subunit beta (146 aa).

Position 1 is an N-acetylvaline (Val-1). Positions 2–146 (HLTDGEKNAL…VANALAHKYH (145 aa)) constitute a Globin domain. Residue Ser-44 is modified to Phosphoserine. Position 59 is an N6-acetyllysine (Lys-59). His-63 is a heme b binding site. Lys-82 carries the post-translational modification N6-acetyllysine. His-92 contributes to the heme b binding site. S-nitrosocysteine is present on Cys-93. Lys-144 is modified (N6-acetyllysine).

It belongs to the globin family. Heterotetramer of two alpha chains and two beta chains. As to expression, red blood cells.

Functionally, involved in oxygen transport from the lung to the various peripheral tissues. The polypeptide is Hemoglobin subunit beta (Otospermophilus beecheyi (California ground squirrel)).